The primary structure comprises 60 residues: Cytotoxin KJC3 (60 aa).

4 cysteine pairs are disulfide-bonded: Cys3–Cys21, Cys14–Cys38, Cys42–Cys53, and Cys54–Cys59.

Belongs to the three-finger toxin family. Short-chain subfamily. Type IA cytotoxin sub-subfamily. Monomer in solution; Homodimer and oligomer in the presence of negatively charged lipids forming a pore with a size ranging between 20 and 30 Angstroms. In terms of tissue distribution, expressed by the venom gland.

It localises to the secreted. The protein resides in the target cell membrane. Functionally, shows cytolytic activity on many different cells by forming pore in lipid membranes. In vivo, increases heart rate or kills the animal by cardiac arrest. In addition, it binds to heparin with high affinity, interacts with Kv channel-interacting protein 1 (KCNIP1) in a calcium-independent manner, and binds to integrin alpha-V/beta-3 (ITGAV/ITGB3) with moderate affinity. The chain is Cytotoxin KJC3 from Naja sputatrix (Malayan spitting cobra).